A 154-amino-acid polypeptide reads, in one-letter code: Large ribosomal subunit protein uL30 (154 aa).

The interval proline 114–glycine 139 is disordered. Residues histidine 119 to lysine 129 are compositionally biased toward basic residues.

This sequence belongs to the universal ribosomal protein uL30 family. As to quaternary structure, part of the 50S ribosomal subunit.

The polypeptide is Large ribosomal subunit protein uL30 (Haloquadratum walsbyi (strain DSM 16790 / HBSQ001)).